Here is a 106-residue protein sequence, read N- to C-terminus: UPF0145 protein AZOSEA16190 (106 aa).

This sequence belongs to the UPF0145 family.

This is UPF0145 protein AZOSEA16190 from Aromatoleum aromaticum (strain DSM 19018 / LMG 30748 / EbN1) (Azoarcus sp. (strain EbN1)).